Reading from the N-terminus, the 160-residue chain is Peptide methionine sulfoxide reductase MsrA (160 aa).

Residue cysteine 11 is part of the active site.

Belongs to the MsrA Met sulfoxide reductase family.

The enzyme catalyses L-methionyl-[protein] + [thioredoxin]-disulfide + H2O = L-methionyl-(S)-S-oxide-[protein] + [thioredoxin]-dithiol. The catalysed reaction is [thioredoxin]-disulfide + L-methionine + H2O = L-methionine (S)-S-oxide + [thioredoxin]-dithiol. Its function is as follows. Has an important function as a repair enzyme for proteins that have been inactivated by oxidation. Catalyzes the reversible oxidation-reduction of methionine sulfoxide in proteins to methionine. This Malacoplasma penetrans (strain HF-2) (Mycoplasma penetrans) protein is Peptide methionine sulfoxide reductase MsrA.